The following is a 154-amino-acid chain: MKLLSKIMVIALATSMLQACNGPGGMNKQGTGTLLGGAGGALLGSQFGKGKGQLVGVGVGALLGAVLGGQIGAGMDEQDRRLAELTSQRALETAPSGSNVEWRNPDNGNYGYVTPNKTYRNSTGQYCREYTQTVVIGGKQQKAYGNACLQPDGQ.

A signal peptide spans 1–19 (MKLLSKIMVIALATSMLQA). Cys20 is lipidated: N-palmitoyl cysteine. Cys20 is lipidated: S-diacylglycerol cysteine.

The protein belongs to the rickettsiale 17 kDa surface antigen family.

The protein localises to the cell outer membrane. This chain is 17 kDa surface antigen (omp), found in Rickettsia parkeri.